The primary structure comprises 351 residues: MIVQRVVLNSRPGKNGNPVAENFRMEEVYLPDNINEGQVQVRTLYLSVDPYMRCRMNEDTGTDYITPWQLSQVVDGGGIGIIEESKHTNLTKGDFVTSFYWPWQTKVILDGNSLEKVDPQLVDGHLSYFLGAIGMPGLTSLIGIQEKGHITAGSNKTMVVSGAAGACGSVAGQIGHFLGCSRVVGICGTHEKCILLTSELGFDAAINYKKDNVAEQLRESCPAGVDVYFDNVGGNISDTVISQMNENSHIILCGQISQYNKDVPYPPPLSPAIEAIQKERNITRERFLVLNYKDKFEPGILQLSQWFKEGKLKIKETVINGLENMGAAFQSMMTGGNIGKQIVCISEEISL.

99-100 (FY) contacts substrate. NADP(+) contacts are provided by residues 165–168 (GACG), Lys-192, Tyr-208, Asn-231, 253–259 (CGQISQY), 287–289 (FLV), and Asn-337. 288–290 (LVL) is a substrate binding site.

It belongs to the NADP-dependent oxidoreductase L4BD family. Monomer. As to expression, widely expressed.

Its subcellular location is the cytoplasm. It carries out the reaction 13,14-dihydro-15-oxo-prostaglandin E2 + NAD(+) = 15-oxoprostaglandin E2 + NADH + H(+). The enzyme catalyses 13,14-dihydro-15-oxo-prostaglandin E2 + NADP(+) = 15-oxoprostaglandin E2 + NADPH + H(+). It catalyses the reaction 13,14-dihydro-15-oxo-PGF2alpha + NADP(+) = 15-oxoprostaglandin F2alpha + NADPH + H(+). The catalysed reaction is 13,14-dihydro-15-oxo-prostaglandin E1 + NADP(+) = 15-oxoprostaglandin E1 + NADPH + H(+). It carries out the reaction 13,14-dihydro-15-oxo-prostaglandin F1alpha + NADP(+) = 15-oxoprostaglandin F1alpha + NADPH + H(+). Functionally, functions as 15-oxo-prostaglandin 13-reductase and acts on 15-keto-PGE1, 15-keto-PGE2, 15-keto-PGE1-alpha and 15-keto-PGE2-alpha with highest activity towards 15-keto-PGE2. Overexpression represses transcriptional activity of PPARG and inhibits adipocyte differentiation. The chain is Prostaglandin reductase 2 from Homo sapiens (Human).